The primary structure comprises 554 residues: Glucose-6-phosphate isomerase 2 (554 aa).

The Proton donor role is filled by Glu-359. Residues His-390 and Lys-518 contribute to the active site.

It belongs to the GPI family.

It localises to the cytoplasm. It carries out the reaction alpha-D-glucose 6-phosphate = beta-D-fructose 6-phosphate. It functions in the pathway carbohydrate biosynthesis; gluconeogenesis. It participates in carbohydrate degradation; glycolysis; D-glyceraldehyde 3-phosphate and glycerone phosphate from D-glucose: step 2/4. Functionally, catalyzes the reversible isomerization of glucose-6-phosphate to fructose-6-phosphate. The chain is Glucose-6-phosphate isomerase 2 from Pseudomonas putida (strain ATCC 47054 / DSM 6125 / CFBP 8728 / NCIMB 11950 / KT2440).